A 487-amino-acid polypeptide reads, in one-letter code: Glutamyl-tRNA(Gln) amidotransferase subunit A (487 aa).

Catalysis depends on charge relay system residues Lys79 and Ser154. Ser178 serves as the catalytic Acyl-ester intermediate.

It belongs to the amidase family. GatA subfamily. As to quaternary structure, heterotrimer of A, B and C subunits.

It carries out the reaction L-glutamyl-tRNA(Gln) + L-glutamine + ATP + H2O = L-glutaminyl-tRNA(Gln) + L-glutamate + ADP + phosphate + H(+). Its function is as follows. Allows the formation of correctly charged Gln-tRNA(Gln) through the transamidation of misacylated Glu-tRNA(Gln) in organisms which lack glutaminyl-tRNA synthetase. The reaction takes place in the presence of glutamine and ATP through an activated gamma-phospho-Glu-tRNA(Gln). This chain is Glutamyl-tRNA(Gln) amidotransferase subunit A, found in Roseiflexus sp. (strain RS-1).